The chain runs to 273 residues: Type II methyltransferase M2.MboI (273 aa).

This sequence belongs to the N(4)/N(6)-methyltransferase family.

The enzyme catalyses a 2'-deoxyadenosine in DNA + S-adenosyl-L-methionine = an N(6)-methyl-2'-deoxyadenosine in DNA + S-adenosyl-L-homocysteine + H(+). A beta subtype methylase that recognizes the double-stranded sequence 5'-GATC-3', methylates A-2 on both strands, and protects the DNA from cleavage by the MboI endonuclease. This seems to be a weaker methylase than M1.MboI. This chain is Type II methyltransferase M2.MboI (mboIBM), found in Moraxella bovis.